Consider the following 162-residue polypeptide: UPF0114 protein PSPA7_5214 (162 aa).

3 helical membrane-spanning segments follow: residues 15 to 35, 53 to 73, and 136 to 156; these read LLAP…IKFF, LILV…LVMV, and LMWY…MGYL.

This sequence belongs to the UPF0114 family.

It is found in the cell membrane. In Pseudomonas paraeruginosa (strain DSM 24068 / PA7) (Pseudomonas aeruginosa (strain PA7)), this protein is UPF0114 protein PSPA7_5214.